We begin with the raw amino-acid sequence, 425 residues long: Serine--tRNA ligase (425 aa).

Residue 230–232 (TAE) participates in L-serine binding. 261-263 (RSE) serves as a coordination point for ATP. Glu-284 serves as a coordination point for L-serine. 348–351 (EISS) serves as a coordination point for ATP. Ser-384 provides a ligand contact to L-serine.

It belongs to the class-II aminoacyl-tRNA synthetase family. Type-1 seryl-tRNA synthetase subfamily. As to quaternary structure, homodimer. The tRNA molecule binds across the dimer.

The protein resides in the cytoplasm. The catalysed reaction is tRNA(Ser) + L-serine + ATP = L-seryl-tRNA(Ser) + AMP + diphosphate + H(+). It catalyses the reaction tRNA(Sec) + L-serine + ATP = L-seryl-tRNA(Sec) + AMP + diphosphate + H(+). Its pathway is aminoacyl-tRNA biosynthesis; selenocysteinyl-tRNA(Sec) biosynthesis; L-seryl-tRNA(Sec) from L-serine and tRNA(Sec): step 1/1. In terms of biological role, catalyzes the attachment of serine to tRNA(Ser). Is also able to aminoacylate tRNA(Sec) with serine, to form the misacylated tRNA L-seryl-tRNA(Sec), which will be further converted into selenocysteinyl-tRNA(Sec). In Nitratidesulfovibrio vulgaris (strain DSM 19637 / Miyazaki F) (Desulfovibrio vulgaris), this protein is Serine--tRNA ligase.